Reading from the N-terminus, the 174-residue chain is RNA pyrophosphohydrolase (174 aa).

Residues 6–150 enclose the Nudix hydrolase domain; that stretch reads GFRPNVGIVI…KREVYRRVMK (145 aa). Residues 38–59 carry the Nudix box motif; sequence GGVDDGETPEQAMFRELYEEIG.

It belongs to the Nudix hydrolase family. RppH subfamily. A divalent metal cation serves as cofactor.

In terms of biological role, accelerates the degradation of transcripts by removing pyrophosphate from the 5'-end of triphosphorylated RNA, leading to a more labile monophosphorylated state that can stimulate subsequent ribonuclease cleavage. This Tolumonas auensis (strain DSM 9187 / NBRC 110442 / TA 4) protein is RNA pyrophosphohydrolase.